The primary structure comprises 56 residues: UPF0391 membrane protein Noc_0482 (56 aa).

The next 2 membrane-spanning stretches (helical) occupy residues 1-21 (MFGW…FGFT) and 29-49 (HIAW…LLLG).

The protein belongs to the UPF0391 family.

It is found in the cell membrane. The sequence is that of UPF0391 membrane protein Noc_0482 from Nitrosococcus oceani (strain ATCC 19707 / BCRC 17464 / JCM 30415 / NCIMB 11848 / C-107).